Here is a 466-residue protein sequence, read N- to C-terminus: Cell division protein FtsP (466 aa).

The tat-type signal signal peptide spans 1 to 28 (MGNYSRRRFLQGSLAIVAGNVLPCAAMA).

The protein belongs to the FtsP family. In terms of processing, predicted to be exported by the Tat system. The position of the signal peptide cleavage has not been experimentally proven.

It localises to the periplasm. In terms of biological role, cell division protein that is required for growth during stress conditions. May be involved in protecting or stabilizing the divisomal assembly under conditions of stress. The polypeptide is Cell division protein FtsP (Gallibacterium anatis (strain UMN179) (Pasteurella anatis)).